A 71-amino-acid polypeptide reads, in one-letter code: MSKTKTFEENLQDLETIVNKLENGDVPLEEAISEFQKGMLLSKELQKTLQAAEKTLVKVMQADGTEVDMDD.

It belongs to the XseB family. Heterooligomer composed of large and small subunits.

The protein localises to the cytoplasm. It catalyses the reaction Exonucleolytic cleavage in either 5'- to 3'- or 3'- to 5'-direction to yield nucleoside 5'-phosphates.. Bidirectionally degrades single-stranded DNA into large acid-insoluble oligonucleotides, which are then degraded further into small acid-soluble oligonucleotides. The sequence is that of Exodeoxyribonuclease 7 small subunit from Streptococcus pyogenes serotype M1.